The chain runs to 869 residues: Dynamin-3 (869 aa).

The 267-residue stretch at 28-294 folds into the Dynamin-type G domain; that stretch reads LLELPQIAVV…LTNHIRDTLP (267 aa). Residues 38–45 are G1 motif; sequence GGQSAGKS. Residue 38-46 participates in GTP binding; the sequence is GGQSAGKSS. The interval 64-66 is G2 motif; that stretch reads VTR. The tract at residues 136 to 139 is G3 motif; the sequence is DLPG. The interval 205–208 is G4 motif; that stretch reads TKLD. 205–211 is a binding site for GTP; it reads TKLDLMD. A Phosphotyrosine modification is found at Y231. The G5 motif stretch occupies residues 235-238; the sequence is VNRS. A GTP-binding site is contributed by 236-239; it reads NRSQ. K299 carries the N6-acetyllysine modification. Positions 525 to 631 constitute a PH domain; it reads IVIRKGWLTV…WKASLLRAGV (107 aa). Y603 carries the post-translational modification Phosphotyrosine. The residue at position 604 (K604) is an N6-acetyllysine. Positions 659 to 750 constitute a GED domain; the sequence is VETIRNLVDS…IIGDINTVTV (92 aa). The interval 752–869 is disordered; sequence TPAPPPVDDS…IRPLESSLLD (118 aa). Phosphoserine occurs at positions 769 and 773. A compositionally biased stretch (low complexity) spans 775–796; the sequence is TTQRRLTLSAPLPRPASSRGPA. 2 stretches are compositionally biased toward pro residues: residues 797–822 and 832–855; these read PAIP…PPFP and PQVP…PSPT. S853 is subject to Phosphoserine.

This sequence belongs to the TRAFAC class dynamin-like GTPase superfamily. Dynamin/Fzo/YdjA family. As to expression, isoform-specific expression in germ-cell-depleted testis (Sertoli cells), brain (peripheral sensory neurons), lung and heart.

The protein resides in the cytoplasm. It localises to the cytoskeleton. Its subcellular location is the cytoplasmic vesicle. It is found in the golgi apparatus. The catalysed reaction is GTP + H2O = GDP + phosphate + H(+). Functionally, microtubule-associated force-producing protein involved in producing microtubule bundles and able to bind and hydrolyze GTP. Most probably involved in vesicular trafficking processes, in particular endocytosis. This Rattus norvegicus (Rat) protein is Dynamin-3 (Dnm3).